A 666-amino-acid chain; its full sequence is DNA mismatch repair protein MutL (666 aa).

It belongs to the DNA mismatch repair MutL/HexB family.

Functionally, this protein is involved in the repair of mismatches in DNA. It is required for dam-dependent methyl-directed DNA mismatch repair. May act as a 'molecular matchmaker', a protein that promotes the formation of a stable complex between two or more DNA-binding proteins in an ATP-dependent manner without itself being part of a final effector complex. The chain is DNA mismatch repair protein MutL from Clostridium botulinum (strain 657 / Type Ba4).